A 166-amino-acid chain; its full sequence is Bacterial non-heme ferritin (166 aa).

The Ferritin-like diiron domain maps to 2 to 145 (LSKDLLEALN…THIDYLNRIG (144 aa)). The Fe cation site is built by E17, E50, H53, E94, and Q127.

Belongs to the ferritin family. Prokaryotic subfamily.

It localises to the cytoplasm. The catalysed reaction is 4 Fe(2+) + O2 + 6 H2O = 4 iron(III) oxide-hydroxide + 12 H(+). In terms of biological role, iron-storage protein. This chain is Bacterial non-heme ferritin (ftnA), found in Staphylococcus haemolyticus (strain JCSC1435).